Reading from the N-terminus, the 488-residue chain is Solute carrier family 41 member 3 (488 aa).

Basic and acidic residues-rich tracts occupy residues methionine 1–glutamate 19 and aspartate 27–glutamate 36. The tract at residues methionine 1–glutamate 36 is disordered. The next 9 membrane-spanning stretches (helical) occupy residues leucine 63 to alanine 83, leucine 147 to methionine 167, valine 189 to glycine 209, isoleucine 220 to methionine 240, tryptophan 251 to isoleucine 271, tyrosine 284 to serine 304, valine 377 to glutamate 397, isoleucine 406 to alanine 426, and glycine 450 to leucine 470.

Belongs to the SLC41A transporter family.

It localises to the mitochondrion inner membrane. It carries out the reaction Mg(2+)(in) + 2 Na(+)(out) = Mg(2+)(out) + 2 Na(+)(in). Functionally, na(+)/Mg(2+) ion exchanger that acts as a predominant Mg(2+) efflux system at the mitochondrial inner membrane. This is Solute carrier family 41 member 3 (Slc41a3) from Mus musculus (Mouse).